A 431-amino-acid polypeptide reads, in one-letter code: Magnetosome protein MamH (431 aa).

A run of 11 helical transmembrane segments spans residues 21–41 (LLSALCMVFMTLVVAIQPLFL), 57–77 (ANVQVVTEVLDLFIFAYLGYL), 86–106 (IIVAGFLVAAIGAVIAPLSPW), 107–127 (IGGASIGALVVYYVSRVIMSA), 156–176 (TAFMMAFGVTLVYAVLMQIPA), 178–198 (AGIAVTMLLTAAVSLAGAWLA), 243–263 (MVFVGLFLMLWFIYFADLIKV), 274–294 (ILIGLMGAVVMLSIPVWRSFI), 302–321 (AVLLGMVLSALGFIMLGFII), 358–378 (LLGSVLGAFNVIGCIGIIFFV), and 380–400 (VGGFLFDYVGPPAPFVFTGVG).

Belongs to the major facilitator superfamily.

Its subcellular location is the magnetosome membrane. Required for correct biomineralization of the magnetosome; probably transports some form of iron. Partially functionally redundant with MamZ. The polypeptide is Magnetosome protein MamH (mamH) (Paramagnetospirillum magneticum (strain ATCC 700264 / AMB-1) (Magnetospirillum magneticum)).